The primary structure comprises 358 residues: MKPEEIERMRDEALAAFAAADSLDALQEAKVAHTGGASPLALANREIGALPPQAKAEAGKRVGMARGAVNKALAARQEELEAERDARVLVEEAVDVTLPHDRVPAGARHPLTTLSERIEDIFVAMGYEVAEGPEAEAEWFNFDALNIGPDHPARGEADTFFVQGPEGGAESGVVLRTHTSPVQIRSALTRELPVYVICPGRVYRTDELDATHTPVFHQVELLAVDEGLTMADLKGTLDHMVQSLFGAEMKTRLRPNFFPFTEPSAEMDMLCYVCKGASVGNPDRPCRTCSSEGWIELGGCGMVNPRVLTACGIDPEKYSGFAFGFGIERMLMFRHNVEDMRDMVEGDVRFTRPFGMEI.

Residue glutamate 262 participates in Mg(2+) binding.

Belongs to the class-II aminoacyl-tRNA synthetase family. Phe-tRNA synthetase alpha subunit type 1 subfamily. As to quaternary structure, tetramer of two alpha and two beta subunits. The cofactor is Mg(2+).

It localises to the cytoplasm. The catalysed reaction is tRNA(Phe) + L-phenylalanine + ATP = L-phenylalanyl-tRNA(Phe) + AMP + diphosphate + H(+). The protein is Phenylalanine--tRNA ligase alpha subunit (pheS) of Streptomyces coelicolor (strain ATCC BAA-471 / A3(2) / M145).